Consider the following 547-residue polypeptide: Chaperonin GroEL (547 aa).

ATP contacts are provided by residues 30–33 (TLGP), Lys-51, 87–91 (DGTTT), Gly-415, and Asp-495. The tract at residues 526–547 (KKESAGGGGMPGGMGGMGGMDF) is disordered. Gly residues predominate over residues 530–547 (AGGGGMPGGMGGMGGMDF).

The protein belongs to the chaperonin (HSP60) family. As to quaternary structure, forms a cylinder of 14 subunits composed of two heptameric rings stacked back-to-back. Interacts with the co-chaperonin GroES.

The protein resides in the cytoplasm. It catalyses the reaction ATP + H2O + a folded polypeptide = ADP + phosphate + an unfolded polypeptide.. Functionally, together with its co-chaperonin GroES, plays an essential role in assisting protein folding. The GroEL-GroES system forms a nano-cage that allows encapsulation of the non-native substrate proteins and provides a physical environment optimized to promote and accelerate protein folding. The chain is Chaperonin GroEL from Hyphomonas neptunium (strain ATCC 15444).